A 203-amino-acid chain; its full sequence is Probable chemoreceptor glutamine deamidase CheD (203 aa).

This sequence belongs to the CheD family.

The enzyme catalyses L-glutaminyl-[protein] + H2O = L-glutamyl-[protein] + NH4(+). Probably deamidates glutamine residues to glutamate on methyl-accepting chemotaxis receptors (MCPs), playing an important role in chemotaxis. This is Probable chemoreceptor glutamine deamidase CheD from Janthinobacterium sp. (strain Marseille) (Minibacterium massiliensis).